A 368-amino-acid chain; its full sequence is Nucleotide pyrophosphatase/phosphodiesterase (368 aa).

This sequence belongs to the metallophosphoesterase superfamily. In terms of assembly, monomer and homomer. Post-translationally, glycosylated.

It is found in the plastid. It localises to the chloroplast. Functionally, hydrolyzes pyrophosphate, phosphodiester and phosphosulfate linkages of nucleotide-sugars, sulfonucleotides and nucleoside di and triphosphates. Highest activity observed with the substrates ADP-glucose and adenosine 5'-phosphosulfate. This chain is Nucleotide pyrophosphatase/phosphodiesterase, found in Hordeum vulgare (Barley).